The sequence spans 207 residues: Small ribosomal subunit protein uS4 (207 aa).

The S4 RNA-binding domain occupies 96-156 (SRLDNVVYRM…KKSHNQSRIY (61 aa)).

The protein belongs to the universal ribosomal protein uS4 family. As to quaternary structure, part of the 30S ribosomal subunit. Contacts protein S5. The interaction surface between S4 and S5 is involved in control of translational fidelity.

One of the primary rRNA binding proteins, it binds directly to 16S rRNA where it nucleates assembly of the body of the 30S subunit. Its function is as follows. With S5 and S12 plays an important role in translational accuracy. The chain is Small ribosomal subunit protein uS4 from Blochmanniella floridana.